The chain runs to 853 residues: DNA mismatch repair protein MutS (853 aa).

616–623 (GPNMGGKS) contributes to the ATP binding site.

The protein belongs to the DNA mismatch repair MutS family.

Functionally, this protein is involved in the repair of mismatches in DNA. It is possible that it carries out the mismatch recognition step. This protein has a weak ATPase activity. The protein is DNA mismatch repair protein MutS of Erwinia tasmaniensis (strain DSM 17950 / CFBP 7177 / CIP 109463 / NCPPB 4357 / Et1/99).